The sequence spans 172 residues: 3-hydroxydecanoyl-[acyl-carrier-protein] dehydratase (172 aa).

The active site involves histidine 71.

Belongs to the thioester dehydratase family. FabA subfamily. Homodimer.

The protein localises to the cytoplasm. The catalysed reaction is a (3R)-hydroxyacyl-[ACP] = a (2E)-enoyl-[ACP] + H2O. The enzyme catalyses (3R)-hydroxydecanoyl-[ACP] = (2E)-decenoyl-[ACP] + H2O. It carries out the reaction (2E)-decenoyl-[ACP] = (3Z)-decenoyl-[ACP]. Its pathway is lipid metabolism; fatty acid biosynthesis. In terms of biological role, necessary for the introduction of cis unsaturation into fatty acids. Catalyzes the dehydration of (3R)-3-hydroxydecanoyl-ACP to E-(2)-decenoyl-ACP and then its isomerization to Z-(3)-decenoyl-ACP. Can catalyze the dehydratase reaction for beta-hydroxyacyl-ACPs with saturated chain lengths up to 16:0, being most active on intermediate chain length. This Brucella ovis (strain ATCC 25840 / 63/290 / NCTC 10512) protein is 3-hydroxydecanoyl-[acyl-carrier-protein] dehydratase.